Consider the following 135-residue polypeptide: Histone H2B.4 (135 aa).

2 stretches are compositionally biased toward basic and acidic residues: residues 1-12 (MAPKAAEKKPVE) and 23-35 (EKKV…GGEK). The segment at 1–43 (MAPKAAEKKPVEKTPAVKKPKAEKKVPTSKEGGEKKGKKKSKK) is disordered. Lys8 and Lys24 each carry N6-acetyllysine. Lys131 is covalently cross-linked (Glycyl lysine isopeptide (Lys-Gly) (interchain with G-Cter in ubiquitin)).

This sequence belongs to the histone H2B family. As to quaternary structure, the nucleosome is a histone octamer containing two molecules each of H2A, H2B, H3 and H4 assembled in one H3-H4 heterotetramer and two H2A-H2B heterodimers. The octamer wraps approximately 147 bp of DNA. In terms of processing, can be acetylated to form H2BK6ac and H2BK33ac. Post-translationally, monoubiquitinated to form H2BK143ub1; may give a specific tag for epigenetic transcriptional activation. In terms of tissue distribution, expressed preferentially in meristematic tissues.

It is found in the nucleus. The protein localises to the chromosome. In terms of biological role, core component of nucleosome. Nucleosomes wrap and compact DNA into chromatin, limiting DNA accessibility to the cellular machineries which require DNA as a template. Histones thereby play a central role in transcription regulation, DNA repair, DNA replication and chromosomal stability. DNA accessibility is regulated via a complex set of post-translational modifications of histones, also called histone code, and nucleosome remodeling. The protein is Histone H2B.4 (TH153) of Triticum aestivum (Wheat).